Reading from the N-terminus, the 146-residue chain is Mite group 2 allergen Der f 2 (146 aa).

Positions 1–17 (MISKILCLSLLVAAVVA) are cleaved as a signal peptide. 3 cysteine pairs are disulfide-bonded: C25–C136, C38–C44, and C90–C95.

This sequence belongs to the NPC2 family.

Its subcellular location is the secreted. The sequence is that of Mite group 2 allergen Der f 2 (DERF2) from Dermatophagoides farinae (American house dust mite).